A 197-amino-acid polypeptide reads, in one-letter code: Small ribosomal subunit protein eS1 (197 aa).

It belongs to the eukaryotic ribosomal protein eS1 family.

This Methanoculleus marisnigri (strain ATCC 35101 / DSM 1498 / JR1) protein is Small ribosomal subunit protein eS1.